The primary structure comprises 87 residues: U3-theraphotoxin-Hhn1h (87 aa).

The N-terminal stretch at 1-24 (MVNMKASMFLTFAGLVLLFVVCYA) is a signal peptide. Residues 25–52 (SESEEKEFPKEMLSSIFAVDNDSKQEER) constitute a propeptide that is removed on maturation. 3 cysteine pairs are disulfide-bonded: cysteine 54–cysteine 67, cysteine 61–cysteine 72, and cysteine 66–cysteine 79.

This sequence belongs to the neurotoxin 10 (Hwtx-1) family. 51 (Hntx-8) subfamily. Hntx-8 sub-subfamily. As to expression, expressed by the venom gland.

It localises to the secreted. Functionally, ion channel inhibitor. In Cyriopagopus hainanus (Chinese bird spider), this protein is U3-theraphotoxin-Hhn1h.